Consider the following 349-residue polypeptide: Prostaglandin reductase 1 (349 aa).

At T18 the chain carries Phosphothreonine. The residue at position 20 (S20) is a Phosphoserine. NADP(+) contacts are provided by residues 152–155 (GAVG), K178, Y193, N217, 239–245 (CGAISMY), 270–272 (FIF), and N321. K178 is modified (N6-(2-hydroxyisobutyryl)lysine; alternate). Residue K178 is modified to N6-acetyllysine; alternate.

The protein belongs to the NADP-dependent oxidoreductase L4BD family. As to quaternary structure, monomer or homodimer.

The protein resides in the cytoplasm. The catalysed reaction is 13,14-dihydro-15-oxo-prostaglandin E1 + NADP(+) = 15-oxoprostaglandin E1 + NADPH + H(+). It catalyses the reaction 13,14-dihydro-15-oxo-prostaglandin E2 + NADP(+) = 15-oxoprostaglandin E2 + NADPH + H(+). It carries out the reaction 13,14-dihydro-15-oxo-prostaglandin F1alpha + NADP(+) = 15-oxoprostaglandin F1alpha + NADPH + H(+). The enzyme catalyses 13,14-dihydro-15-oxo-PGF2alpha + NADP(+) = 15-oxoprostaglandin F2alpha + NADPH + H(+). The catalysed reaction is leukotriene B4 + NADP(+) = 12-oxo-leukotriene B4 + NADPH + H(+). It catalyses the reaction 20-hydroxy-leukotriene B4 + NADP(+) = 12-oxo-20-hydroxy-leukotriene B4 + NADPH + H(+). It carries out the reaction 6-trans-leukotriene B4 + NADP(+) = 12-oxo-(5S)-hydroxy-(6E,8E,10E,14Z)-eicosatetraenoate + NADPH + H(+). The enzyme catalyses (5S,12S)-dihydroxy-(6E,10E,12E,14Z)-eicosatetraenoate + NADP(+) = 12-oxo-(5S)-hydroxy-(6E,8E,10E,14Z)-eicosatetraenoate + NADPH + H(+). The catalysed reaction is an n-alkanal + NADP(+) = an alk-2-enal + NADPH + H(+). It catalyses the reaction hexanal + NADP(+) = (E)-hex-2-enal + NADPH + H(+). It carries out the reaction octanal + NADP(+) = (2E)-octenal + NADPH + H(+). The enzyme catalyses decanal + NADP(+) = (2E)-decenal + NADPH + H(+). The catalysed reaction is dodecanal + NADP(+) = (2E)-dodecenal + NADPH + H(+). It catalyses the reaction 4-hydroxynonanal + NADP(+) = (E)-4-hydroxynon-2-enal + NADPH + H(+). It carries out the reaction pentan-2-one + NADP(+) = (E)-pent-3-en-2-one + NADPH + H(+). The enzyme catalyses nonan-2-one + NADP(+) = (3E)-nonen-2-one + NADPH + H(+). Its function is as follows. NAD(P)H-dependent oxidoreductase involved in metabolic inactivation of pro- and anti-inflammatory eicosanoids: prostaglandins (PG), leukotrienes (LT) and lipoxins (LX). Catalyzes with high efficiency the reduction of the 13,14 double bond of 15-oxoPGs, including 15-oxo-PGE1, 15-oxo-PGE2, 15-oxo-PGF1-alpha and 15-oxo-PGF2-alpha. Catalyzes with lower efficiency the oxidation of the hydroxyl group at C12 of LTB4 and its derivatives, converting them into biologically less active 12-oxo-LTB4 metabolites. Reduces 15-oxo-LXA4 to 13,14 dihydro-15-oxo-LXA4, enhancing neutrophil recruitment at the inflammatory site. Plays a role in metabolic detoxification of alkenals and ketones. Reduces alpha,beta-unsaturated alkenals and ketones, particularly those with medium-chain length, showing highest affinity toward (2E)-decenal and (3E)-3-nonen-2-one. May inactivate 4-hydroxy-2-nonenal, a cytotoxic lipid constituent of oxidized low-density lipoprotein particles. The chain is Prostaglandin reductase 1 (PTGR1) from Oryctolagus cuniculus (Rabbit).